A 486-amino-acid polypeptide reads, in one-letter code: Arginine deiminase (486 aa).

The active-site Amidino-cysteine intermediate is the Cys476.

It belongs to the arginine deiminase family.

It localises to the cytoplasm. It carries out the reaction L-arginine + H2O = L-citrulline + NH4(+). It functions in the pathway amino-acid degradation; L-arginine degradation via ADI pathway; carbamoyl phosphate from L-arginine: step 1/2. Involved in the arginine deiminase pathway of fermentative arginine utilization. The sequence is that of Arginine deiminase (arcA) from Halobacterium salinarum (strain ATCC 29341 / DSM 671 / R1).